The primary structure comprises 179 residues: Fimbrial subunit ElfA (179 aa).

The N-terminal stretch at 1 to 21 (MKKSVLTAFITVVCATSSVMA) is a signal peptide.

Belongs to the fimbrial protein family.

The protein resides in the fimbrium. Functionally, part of the elfADCG-ycbUVF fimbrial operon, which promotes adhesion of bacteria to different abiotic surfaces. ElfA is the major fimbrial subunit produced by this operon. In Escherichia coli (strain K12), this protein is Fimbrial subunit ElfA (elfA).